A 238-amino-acid chain; its full sequence is Ion-translocating oxidoreductase complex subunit E (238 aa).

5 helical membrane passes run L41 to V61, L71 to A91, E95 to G115, S130 to L150, and G184 to L204.

Belongs to the NqrDE/RnfAE family. As to quaternary structure, the complex is composed of six subunits: RnfA, RnfB, RnfC, RnfD, RnfE and RnfG.

It is found in the cell inner membrane. Functionally, part of a membrane-bound complex that couples electron transfer with translocation of ions across the membrane. This chain is Ion-translocating oxidoreductase complex subunit E, found in Pseudomonas aeruginosa (strain UCBPP-PA14).